The sequence spans 318 residues: MEWNGRVDGYDEDILRIHQVIQVKNLDELMENDYTGKKVCFVSYNSNEGIRRNNGRLGAADGWKHLKTALSNFPIFDTDIKFYDLKDPVDVKAGKLEEAQQELAEVVAKLKSKDYFVVCMGGGHDIAYGTYNGILSYAKTQTKDPKVGIISFDAHFDMREYNKGANSGTMFYQIADDCKREGIKFDYNVIGIQRFSNTKRLFDRAKSFGVTYYLAEDILKLSDLNIKPILERNDYIHLTICTDVFHITCAPGVSAPQTFGIWPNQAIGLLNTIAKTKKNLTLEVAEISPRYDYDDRTSRLIANLIYQVILKHFDCEIN.

Residues histidine 124, aspartate 153, histidine 155, aspartate 157, cysteine 241, and aspartate 243 each coordinate Mn(2+).

This sequence belongs to the arginase family. It depends on Mn(2+) as a cofactor.

It catalyses the reaction N-formimidoyl-L-glutamate + H2O = formamide + L-glutamate. Its pathway is amino-acid degradation; L-histidine degradation into L-glutamate; L-glutamate from N-formimidoyl-L-glutamate (hydrolase route): step 1/1. Functionally, catalyzes the conversion of N-formimidoyl-L-glutamate to L-glutamate and formamide. The chain is Formimidoylglutamase from Fusobacterium nucleatum subsp. nucleatum (strain ATCC 25586 / DSM 15643 / BCRC 10681 / CIP 101130 / JCM 8532 / KCTC 2640 / LMG 13131 / VPI 4355).